Consider the following 268-residue polypeptide: 4-hydroxy-tetrahydrodipicolinate reductase (268 aa).

An NAD(+)-binding site is contributed by 9-14 (GCSGRM). R36 serves as a coordination point for NADP(+). NAD(+) is bound by residues 98–100 (GTT) and 122–125 (APNT). H155 serves as the catalytic Proton donor/acceptor. H156 contributes to the (S)-2,3,4,5-tetrahydrodipicolinate binding site. The active-site Proton donor is K159. 165-166 (GT) is a binding site for (S)-2,3,4,5-tetrahydrodipicolinate.

This sequence belongs to the DapB family.

The protein localises to the cytoplasm. It catalyses the reaction (S)-2,3,4,5-tetrahydrodipicolinate + NAD(+) + H2O = (2S,4S)-4-hydroxy-2,3,4,5-tetrahydrodipicolinate + NADH + H(+). It carries out the reaction (S)-2,3,4,5-tetrahydrodipicolinate + NADP(+) + H2O = (2S,4S)-4-hydroxy-2,3,4,5-tetrahydrodipicolinate + NADPH + H(+). It functions in the pathway amino-acid biosynthesis; L-lysine biosynthesis via DAP pathway; (S)-tetrahydrodipicolinate from L-aspartate: step 4/4. In terms of biological role, catalyzes the conversion of 4-hydroxy-tetrahydrodipicolinate (HTPA) to tetrahydrodipicolinate. The polypeptide is 4-hydroxy-tetrahydrodipicolinate reductase (Colwellia psychrerythraea (strain 34H / ATCC BAA-681) (Vibrio psychroerythus)).